Reading from the N-terminus, the 527-residue chain is Cytochrome P450 monooxyhenase eriA (527 aa).

Residues 17–37 (LGVVDLSLLGVGAVIAFAWLF) traverse the membrane as a helical segment. Residues asparagine 77, asparagine 274, and asparagine 297 are each glycosylated (N-linked (GlcNAc...) asparagine). A heme-binding site is contributed by cysteine 453.

The protein belongs to the cytochrome P450 family. The cofactor is heme.

It localises to the membrane. It catalyses the reaction cyathadiol + reduced [NADPH--hemoprotein reductase] + O2 = cyathatriol + oxidized [NADPH--hemoprotein reductase] + H2O + H(+). It functions in the pathway secondary metabolite biosynthesis. Its function is as follows. Cytochrome P450 monooxygenase; part of the gene cluster that mediates the biosynthesis of erinacines, cyathane-xylosides that show unique biological activities, including leishmanicidal activity, stimulating activity for nerve growth-factor synthesis, and agonistic activity toward the kappa opioid receptor. Within the pathway, eriA catalyzes C-11 hydroxylation in the presence of the short chain dehydrogenase/reductase (SDR) eriH, which leads to the production of cyathatriol. The first step of the erinacines biosynthesis pathway is catalyzed by the geranylgeranyl diphosphate (GGPP) synthase eriE via conversion of farnesyl pyrophosphate and isopentyl pyrophosphate into geranylgeranyl pyrophosphate (GGPP). GGPP is then substrate of the diterpene cyclase eriG for the production of cyatha-3,12-diene. The cytochrome P450 monooxygenase eriI then hydroxylates cyatha-3,12-diene at C-14 of the seven-membered ring to produce erinacol, which is further hydroxylated at C-15 by the cytochrome P450 monooxygenase eriC to yield cyathadiol. The cytochrome P450 monooxygenase eriA then catalyzes C-11 hydroxylation in the presence of the short chain dehydrogenase/reductase (SDR) eriH, which leads to the production of cyathatriol. The acetyltransferase eriL converts cyathatriol into 11-O-acetyl-cyathatriol. The SDR eriH catalyzes further oxidation of 11-O-acetyl-cyathatriol into 1-O-acetylcyathin A3. Finally, the glycosyl transferase eriJ tranfers xylose from UDP-xylose onto C-14 of 11-O-acetyl-cyathatriol to form eracine Q. EriJ is also able to convert 11-O-acetyl-cyathatriol to eracine Q2 by using UDP-D-glucose as cosubstrate, but at a lower rate. This Hericium erinaceus (Lion's mane mushroom) protein is Cytochrome P450 monooxyhenase eriA.